Reading from the N-terminus, the 175-residue chain is Regenerating islet-derived protein 3-beta (175 aa).

The N-terminal stretch at 1–26 (MLPPTACSVMSWMLLSCLMLLSQVQG) is a signal peptide. Positions 27 to 37 (EDSLKNIPSAR) are excised as a propeptide. 3 disulfides stabilise this stretch: C40/C51, C68/C171, and C146/C163. A C-type lectin domain is found at 47-172 (YGSYCYALFQ…CEVKLPYVCK (126 aa)). A Zn(2+)-binding site is contributed by H107. An EPN motif is present at residues 114–116 (EPN). E121 is a Zn(2+) binding site.

Forms a hexameric membrane-permeabilizing oligomeric pore on membrane phospholipids. The hexamer is formed by three dimers related by helical symmetry. Forms filaments, filamentation traps pore complexes and limits damage to host cells. Interacts with EXTL3. In terms of processing, proteolytic processing by trypsin removes an inhibitory N-terminal propeptide and is essential for peptidoglycan binding and antibacterial activity. In terms of tissue distribution, constitutively expressed in the small intestine, moderately in colon and at an extremely low level in healthy pancreas.

The protein localises to the secreted. With respect to regulation, lipopolysaccharide inhibits pore-forming activity, explaining why is bactericidal for Gram-positive but not Gram-negative bacteria. Functionally, bactericidal C-type lectin which acts against several intestinal Gram-positive and Gram-negative bacteria. Lacks antibacterial activity against S.typhimurium. May play a role in protection against infection with S.enteritidis by inhibiting its translocation from the gut lumen into intestinal tissues and further extraintestinal tissues. Acts as a hormone in response to different stimuli. Secreted by different cell types to activate its receptor EXTL3 and induce cell specific signaling pathways. In pancreas, is able stimulate cell proliferation. The polypeptide is Regenerating islet-derived protein 3-beta (Mus musculus (Mouse)).